The chain runs to 205 residues: MTERRVPFSLLRGPSWDPFRDWYPHSRLFDQAFGLPRLPEEWSQWLGGSSWPGYVRPLPPAAIESPAVAAPAYSRALSRQLSSGVSEIRHTADRWRVSLDVNHFAPDELTVKTKDGVVEITGKHEERQDEHGYISRCFTRKYTLPPGVDPTQVSSSLSPEGTLTVEAPMPKLATQSNEITIPVTFESRAQLGGPEAAKSDETAAK.

Arg-12 is subject to Omega-N-methylarginine. Ser-15 bears the Phosphoserine; by MAPKAPK2 and MAPKAPK3 mark. Phosphoserine is present on residues Ser-26 and Ser-65. The interaction with TGFB1I1 stretch occupies residues Ala-70–Lys-205. The sHSP domain maps to Ala-76–Thr-184. Residues Ser-78 and Ser-82 each carry the phosphoserine; by MAPKAPK2, MAPKAPK3 and MAPKAPK5 modification. Phosphoserine occurs at positions 83, 86, and 98. Residue Lys-123 is modified to N6-acetyllysine. The residue at position 174 (Thr-174) is a Phosphothreonine. Phosphoserine occurs at positions 176 and 199.

This sequence belongs to the small heat shock protein (HSP20) family. In terms of assembly, homooligomer. Homodimer; becomes monomeric upon activation. Heterooligomer; with HSPB6. Associates with alpha- and beta-tubulin. Interacts with TGFB1I1. Interacts with CRYAB. Interacts with HSPB8. Interacts with HSPBAP1. In terms of processing, phosphorylated upon exposure to protein kinase C activators and heat shock. Phosphorylation by MAPKAPK2 and MAPKAPK3 in response to stress dissociates HSPB1 from large small heat-shock protein (sHsps) oligomers and impairs its chaperone activity and ability to protect against oxidative stress effectively. Phosphorylation by MAPKAPK5 in response to PKA stimulation induces F-actin rearrangement. Detected in all tissues tested: skeletal muscle, heart, aorta, large intestine, small intestine, stomach, esophagus, bladder, adrenal gland, thyroid, pancreas, testis, adipose tissue, kidney, liver, spleen, cerebral cortex, blood serum and cerebrospinal fluid. Highest levels are found in the heart and in tissues composed of striated and smooth muscle.

It localises to the cytoplasm. It is found in the nucleus. The protein localises to the cytoskeleton. Its subcellular location is the spindle. Functionally, small heat shock protein which functions as a molecular chaperone probably maintaining denatured proteins in a folding-competent state. Plays a role in stress resistance and actin organization. Through its molecular chaperone activity may regulate numerous biological processes including the phosphorylation and the axonal transport of neurofilament proteins. The protein is Heat shock protein beta-1 (HSPB1) of Homo sapiens (Human).